The chain runs to 485 residues: Ribulose bisphosphate carboxylase large chain (485 aa).

Substrate contacts are provided by Asn-124 and Thr-174. Lys-176 acts as the Proton acceptor in catalysis. Residue Lys-178 coordinates substrate. Positions 202, 204, and 205 each coordinate Mg(2+). Lys-202 carries the post-translational modification N6-carboxylysine. His-294 serves as the catalytic Proton acceptor. Substrate is bound by residues Arg-295, His-327, and Ser-379.

The protein belongs to the RuBisCO large chain family. Type I subfamily. As to quaternary structure, heterohexadecamer of 8 large chains and 8 small chains. Requires Mg(2+) as cofactor.

The catalysed reaction is 2 (2R)-3-phosphoglycerate + 2 H(+) = D-ribulose 1,5-bisphosphate + CO2 + H2O. It carries out the reaction D-ribulose 1,5-bisphosphate + O2 = 2-phosphoglycolate + (2R)-3-phosphoglycerate + 2 H(+). Functionally, ruBisCO catalyzes two reactions: the carboxylation of D-ribulose 1,5-bisphosphate, the primary event in carbon dioxide fixation, as well as the oxidative fragmentation of the pentose substrate. Both reactions occur simultaneously and in competition at the same active site. This is Ribulose bisphosphate carboxylase large chain from Rhodopseudomonas palustris (strain HaA2).